A 502-amino-acid polypeptide reads, in one-letter code: 2,3-bisphosphoglycerate-independent phosphoglycerate mutase (502 aa).

Mn(2+) contacts are provided by D12 and S62. Catalysis depends on S62, which acts as the Phosphoserine intermediate. Residues H123, 152 to 153, R183, R189, 255 to 258, and K329 contribute to the substrate site; these read RD and RPDR. 5 residues coordinate Mn(2+): D394, H398, D435, H436, and H453.

This sequence belongs to the BPG-independent phosphoglycerate mutase family. As to quaternary structure, monomer. Requires Mn(2+) as cofactor.

It catalyses the reaction (2R)-2-phosphoglycerate = (2R)-3-phosphoglycerate. It functions in the pathway carbohydrate degradation; glycolysis; pyruvate from D-glyceraldehyde 3-phosphate: step 3/5. Catalyzes the interconversion of 2-phosphoglycerate and 3-phosphoglycerate. In Malacoplasma penetrans (strain HF-2) (Mycoplasma penetrans), this protein is 2,3-bisphosphoglycerate-independent phosphoglycerate mutase.